Reading from the N-terminus, the 421-residue chain is Ankyrin repeat and SOCS box protein 6 (421 aa).

ANK repeat units lie at residues 67–97 (EGVS…NLNF), 102–131 (TYYT…DINR), 136–166 (HESS…DVNA), 170–205 (HGKT…DVKA), 226–255 (GGDK…DPSE), and 260–289 (ESLT…AYNC). The SOCS box domain occupies 360–415 (ALHFSLRQLESYPPPLKHLCRVAIRLYLQPWPVDVKVKALPLPDRLKWYLLSEHSG).

Belongs to the ankyrin SOCS box (ASB) family. In terms of assembly, binds APS. Identified in a complex with ELOB and ELOC. Interacts with CUL5 and RNF7. Interacts with SQSTM1.

It is found in the cytoplasm. Its pathway is protein modification; protein ubiquitination. In terms of biological role, probable substrate-recognition component of a SCF-like ECS (Elongin-Cullin-SOCS-box protein) E3 ubiquitin-protein ligase complex which mediates the ubiquitination and subsequent proteasomal degradation of target proteins. May play a role in the regulation of cell proliferation and autophagy by promoting the ubiquitination and degradation of SQSTM1. In Pongo abelii (Sumatran orangutan), this protein is Ankyrin repeat and SOCS box protein 6 (ASB6).